We begin with the raw amino-acid sequence, 536 residues long: Anthranilate synthase component 1 2 (536 aa).

Residues Ser59 and 299 to 301 (PYM) each bind L-tryptophan. 334-335 (GT) contacts chorismate. Glu361 contacts Mg(2+). Residues Tyr449, Arg469, 487–489 (GAG), and Gly489 contribute to the chorismate site. Residue Glu502 coordinates Mg(2+).

This sequence belongs to the anthranilate synthase component I family. Tetramer of two components I and two components II. Mg(2+) serves as cofactor.

The catalysed reaction is chorismate + L-glutamine = anthranilate + pyruvate + L-glutamate + H(+). It participates in amino-acid biosynthesis; L-tryptophan biosynthesis; L-tryptophan from chorismate: step 1/5. This Haloarcula marismortui (strain ATCC 43049 / DSM 3752 / JCM 8966 / VKM B-1809) (Halobacterium marismortui) protein is Anthranilate synthase component 1 2 (trpE2).